The chain runs to 323 residues: Aspartate carbamoyltransferase catalytic subunit (323 aa).

Positions 55 and 56 each coordinate carbamoyl phosphate. Lys83 lines the L-aspartate pocket. Carbamoyl phosphate contacts are provided by Arg105, His133, and Gln136. Positions 166 and 220 each coordinate L-aspartate. Residues Gly261 and Pro262 each coordinate carbamoyl phosphate.

This sequence belongs to the aspartate/ornithine carbamoyltransferase superfamily. ATCase family. In terms of assembly, heterododecamer (2C3:3R2) of six catalytic PyrB chains organized as two trimers (C3), and six regulatory PyrI chains organized as three dimers (R2).

It carries out the reaction carbamoyl phosphate + L-aspartate = N-carbamoyl-L-aspartate + phosphate + H(+). The protein operates within pyrimidine metabolism; UMP biosynthesis via de novo pathway; (S)-dihydroorotate from bicarbonate: step 2/3. Functionally, catalyzes the condensation of carbamoyl phosphate and aspartate to form carbamoyl aspartate and inorganic phosphate, the committed step in the de novo pyrimidine nucleotide biosynthesis pathway. In Acidothermus cellulolyticus (strain ATCC 43068 / DSM 8971 / 11B), this protein is Aspartate carbamoyltransferase catalytic subunit.